Here is a 698-residue protein sequence, read N- to C-terminus: FHF complex subunit HOOK-interacting protein 2B (698 aa).

This sequence belongs to the FHIP family.

This is FHF complex subunit HOOK-interacting protein 2B (fhip2b) from Xenopus tropicalis (Western clawed frog).